The following is a 248-amino-acid chain: DNA repair protein RecO (248 aa).

The protein belongs to the RecO family.

In terms of biological role, involved in DNA repair and RecF pathway recombination. The sequence is that of DNA repair protein RecO from Rubrobacter xylanophilus (strain DSM 9941 / JCM 11954 / NBRC 16129 / PRD-1).